The following is a 590-amino-acid chain: Interferon alpha/beta receptor 1 (590 aa).

Residues 1-26 form the signal peptide; that stretch reads MLAVVGAAALVLVAGAPWVLPSAAGG. The Extracellular segment spans residues 27 to 429; the sequence is ENLKPPENID…EKTRPGSFST (403 aa). Fibronectin type-III domains are found at residues 31–125, 127–226, 230–327, and 332–425; these read PPEN…PFYT, HMSP…TTVA, PVPG…FIDS, and LPPP…TRPG. Asn-43 carries N-linked (GlcNAc...) asparagine glycosylation. Cysteines 78 and 86 form a disulfide. Asn-109, Asn-181, and Asn-214 each carry an N-linked (GlcNAc...) asparagine glycan. 2 disulfide bridges follow: Cys-199-Cys-220 and Cys-284-Cys-292. 4 N-linked (GlcNAc...) asparagine glycosylation sites follow: Asn-314, Asn-370, Asn-409, and Asn-413. A disulfide bridge connects residues Cys-397 and Cys-419. The helical transmembrane segment at 430–449 threads the bilayer; it reads IWIITGLGVVFFSVMVLYAL. Over 450 to 590 the chain is Cytoplasmic; that stretch reads RSVWKYLCHV…ALRTEPALLC (141 aa). The tract at residues 483–492 is important for interaction with TYK2; that stretch reads VLLTAEEHTE. The segment at 514–545 is disordered; the sequence is DLRKYSSQTSQDSGNYSNEEEESVGTESGQAV. Lys-517 is covalently cross-linked (Glycyl lysine isopeptide (Lys-Gly) (interchain with G-Cter in ubiquitin)). A compositionally biased stretch (polar residues) spans 518–530; sequence YSSQTSQDSGNYS. Ser-526 bears the Phosphoserine mark.

The protein belongs to the type II cytokine receptor family. In terms of assembly, heterodimer with IFNAR2; forming the receptor for type I interferon. Interacts with TYK2. Interacts with STAT1 and STAT2. Interacts (serine-phosphorylated form) with FBXW11, the substrate recognition component of a SCF (SKP1-CUL1-F-box protein) E3 ubiquitin-protein ligase complex. 3Interacts with SHMT2; this promotes interaction with ABRAXAS2 and the BRISC complex. Interacts with TRIM10; this interaction prevents association between IFNAR1 and TYK2. Post-translationally, ubiquitinated. This leads to its internalization and lysosomal degradation. The 'Lys-63'-linked ubiquitin chains are cleaved off by the BRISC complex; this prevents receptor internalization and degradation. Probable ubiquitination sites have been identified in human, but are poorly conserved across species. Phosphorylated on serine residues in response to interferon binding; this promotes interaction with FBXW11 and ubiquitination.

The protein localises to the cell membrane. It is found in the late endosome. The protein resides in the lysosome. In terms of biological role, together with IFNAR2, forms the heterodimeric receptor for type I interferons (including interferons alpha, beta, epsilon, omega and kappa). Type I interferon binding activates the JAK-STAT signaling cascade, and triggers tyrosine phosphorylation of a number of proteins including JAKs, TYK2, STAT proteins and the IFNR alpha- and beta-subunits themselves. STAT proteins are then phosphorylated by the JAKs, promoting their translocation into the nucleus to regulate expression of interferon-regulated genes. Can also act independently of IFNAR2: form an active IFNB1 receptor by itself and activate a signaling cascade that does not involve activation of the JAK-STAT pathway. In Mus musculus (Mouse), this protein is Interferon alpha/beta receptor 1 (Ifnar1).